The sequence spans 262 residues: MTQPVPRLSVPAALALGSAALGAAFATGLFLGRRCPPWRGRREQCLLPPEDSRLWQYLLSRSMREHPALRSLRLLTLEQPQGDSMMTCEQAQLLANLARLIQAKKALDLGTFTGYSALALALALPADGRVVTCEVDAQPPELGRPLWRQAEAEHKIDLRLKPALETLDELLAAGEAGTFDVAVVDADKENCSAYYERCLQLLRPGGILAVLRVLWRGKVLQPPKGDVAAECVRNLNERIRRDVRVYISLLPLGDGLTLAFKI.

The helical; Signal-anchor for type II membrane protein transmembrane segment at 12 to 32 threads the bilayer; the sequence is AALALGSAALGAAFATGLFLG. S-adenosyl-L-methionine is bound by residues D108, 110–111, S116, E134, V135, A163, D185, D187, and Y194; that span reads GT.

This sequence belongs to the class I-like SAM-binding methyltransferase superfamily. Cation-dependent O-methyltransferase family. As to quaternary structure, homodimer.

The protein resides in the membrane. In terms of biological role, putative O-methyltransferase. The polypeptide is Catechol O-methyltransferase domain-containing protein 1 (COMTD1) (Homo sapiens (Human)).